The primary structure comprises 1381 residues: Contactin-associated protein 1 (1381 aa).

The first 20 residues, 1–20, serve as a signal peptide directing secretion; sequence MMSLRLFSILLAAVVSGAQG. The Extracellular segment spans residues 21–1284; that stretch reads WGYYGCNEEL…PYYHDDGWIA (1264 aa). The region spanning 26-169 is the F5/8 type C domain; it reads CNEELVGPLY…IGLRLGIYGC (144 aa). The cysteines at positions 26 and 169 are disulfide-linked. N-linked (GlcNAc...) asparagine glycans are attached at residues Asn121, Asn129, and Asn277. 2 Laminin G-like domains span residues 204-356 and 390-539; these read FKTE…AFRC and FRTW…FDTC. Cys324 and Cys356 are oxidised to a cystine. 3 N-linked (GlcNAc...) asparagine glycosylation sites follow: Asn421, Asn500, and Asn519. 4 disulfides stabilise this stretch: Cys507-Cys539, Cys545-Cys556, Cys550-Cys565, and Cys567-Cys577. Residues 544–576 form the EGF-like 1 domain; it reads RCSPNMCEHDGRCYQSWDDFICYCELTGYKGVT. Residues 577-796 form the Fibrinogen C-terminal domain; the sequence is CHEPLYKESC…NTISFRTGAA (220 aa). 9 N-linked (GlcNAc...) asparagine glycosylation sites follow: Asn598, Asn654, Asn665, Asn764, Asn805, Asn844, Asn861, Asn949, and Asn957. The region spanning 814–958 is the Laminin G-like 3 domain; the sequence is FRTSAPSGVF…NASEGTFPNC (145 aa). 4 disulfide bridges follow: Cys931-Cys958, Cys962-Cys975, Cys969-Cys984, and Cys986-Cys996. The 35-residue stretch at 962–996 folds into the EGF-like 2 domain; it reads CTHPRFPCFHGGRCVERYSYYTCDCDLTAFDGPYC. 2 N-linked (GlcNAc...) asparagine glycosylation sites follow: Asn1079 and Asn1148. The 163-residue stretch at 1089-1251 folds into the Laminin G-like 4 domain; that stretch reads FSTSSAPAVL…VQGELSESNC (163 aa). A disulfide bridge links Cys1210 with Cys1251. A helical transmembrane segment spans residues 1285 to 1305; it reads ILLGFLVAFLLLGLVGMLVLF. Topologically, residues 1306–1381 are cytoplasmic; sequence YLQNHRYKGS…PQILEESRSE (76 aa). Positions 1317–1381 are disordered; the sequence is HTNEPKATHD…PQILEESRSE (65 aa). The segment covering 1319–1329 has biased composition (basic and acidic residues); the sequence is NEPKATHDSHP. Residues 1329–1366 carry the SH3-binding motif; it reads PGGKAPLPPSGPAQAPAPTPAPTQVPTPAPAPASGPGP. Positions 1334-1363 are enriched in pro residues; that stretch reads PLPPSGPAQAPAPTPAPTQVPTPAPAPASG. Ser1380 is modified (phosphoserine).

It belongs to the neurexin family. Interacts with CNTN1/contactin in cis form. Predominantly expressed in brain. In myelinated nerve fibers of the CNS predominantly found in paranodal axoglial junctions. In unmyelinated nerve fibers of the CNS diffusely distributed along the entire surface. Weak expression is detected in ovary, pancreas, colon, lung, heart, intestine and testis.

It is found in the membrane. It localises to the cell junction. The protein localises to the paranodal septate junction. In terms of biological role, required, with CNTNAP2, for radial and longitudinal organization of myelinated axons. Plays a role in the formation of functional distinct domains critical for saltatory conduction of nerve impulses in myelinated nerve fibers. Demarcates the paranodal region of the axo-glial junction. In association with contactin involved in the signaling between axons and myelinating glial cells. The sequence is that of Contactin-associated protein 1 (Cntnap1) from Rattus norvegicus (Rat).